Reading from the N-terminus, the 455-residue chain is 3-phosphoshikimate 1-carboxyvinyltransferase (455 aa).

The tract at residues 1 to 23 is disordered; sequence MSHGSNPRPATARKSSDLKGTLR. 3-phosphoshikimate contacts are provided by lysine 28, serine 29, and arginine 33. Phosphoenolpyruvate is bound at residue lysine 28. Positions 100 and 128 each coordinate phosphoenolpyruvate. The 3-phosphoshikimate site is built by serine 173, glutamine 175, aspartate 326, and lysine 353. Glutamine 175 provides a ligand contact to phosphoenolpyruvate. Catalysis depends on aspartate 326, which acts as the Proton acceptor. Phosphoenolpyruvate contacts are provided by arginine 357 and arginine 405.

The protein belongs to the EPSP synthase family. As to quaternary structure, monomer.

The protein resides in the cytoplasm. The catalysed reaction is 3-phosphoshikimate + phosphoenolpyruvate = 5-O-(1-carboxyvinyl)-3-phosphoshikimate + phosphate. It participates in metabolic intermediate biosynthesis; chorismate biosynthesis; chorismate from D-erythrose 4-phosphate and phosphoenolpyruvate: step 6/7. Its function is as follows. Catalyzes the transfer of the enolpyruvyl moiety of phosphoenolpyruvate (PEP) to the 5-hydroxyl of shikimate-3-phosphate (S3P) to produce enolpyruvyl shikimate-3-phosphate and inorganic phosphate. This chain is 3-phosphoshikimate 1-carboxyvinyltransferase, found in Rhizobium meliloti (strain 1021) (Ensifer meliloti).